A 112-amino-acid chain; its full sequence is T cell receptor alpha variable 30 (112 aa).

Positions 1 to 21 (METLLKVLSGTLLWQLTWVRS) are cleaved as a signal peptide. An Ig-like domain is found at 24-112 (PVQSPQAVIL…YSGTYFCGTE (89 aa)). N42 carries N-linked (GlcNAc...) asparagine glycosylation. C43 and C109 are oxidised to a cystine.

In terms of assembly, alpha-beta TR is a heterodimer composed of an alpha and beta chain; disulfide-linked. The alpha-beta TR is associated with the transmembrane signaling CD3 coreceptor proteins to form the TR-CD3 (TcR or TCR). The assembly of alpha-beta TR heterodimers with CD3 occurs in the endoplasmic reticulum where a single alpha-beta TR heterodimer associates with one CD3D-CD3E heterodimer, one CD3G-CD3E heterodimer and one CD247 homodimer forming a stable octameric structure. CD3D-CD3E and CD3G-CD3E heterodimers preferentially associate with TR alpha and TR beta chains, respectively. The association of the CD247 homodimer is the last step of TcR assembly in the endoplasmic reticulum and is required for transport to the cell surface.

The protein localises to the cell membrane. Its function is as follows. V region of the variable domain of T cell receptor (TR) alpha chain that participates in the antigen recognition. Alpha-beta T cell receptors are antigen specific receptors which are essential to the immune response and are present on the cell surface of T lymphocytes. Recognize peptide-major histocompatibility (MH) (pMH) complexes that are displayed by antigen presenting cells (APC), a prerequisite for efficient T cell adaptive immunity against pathogens. Binding of alpha-beta TR to pMH complex initiates TR-CD3 clustering on the cell surface and intracellular activation of LCK that phosphorylates the ITAM motifs of CD3G, CD3D, CD3E and CD247 enabling the recruitment of ZAP70. In turn ZAP70 phosphorylates LAT, which recruits numerous signaling molecules to form the LAT signalosome. The LAT signalosome propagates signal branching to three major signaling pathways, the calcium, the mitogen-activated protein kinase (MAPK) kinase and the nuclear factor NF-kappa-B (NF-kB) pathways, leading to the mobilization of transcription factors that are critical for gene expression and essential for T cell growth and differentiation. The T cell repertoire is generated in the thymus, by V-(D)-J rearrangement. This repertoire is then shaped by intrathymic selection events to generate a peripheral T cell pool of self-MH restricted, non-autoaggressive T cells. Post-thymic interaction of alpha-beta TR with the pMH complexes shapes TR structural and functional avidity. In Homo sapiens (Human), this protein is T cell receptor alpha variable 30.